Consider the following 625-residue polypeptide: uncharacterized protein (625 aa).

A DNA-binding region (zn(2)-C6 fungal-type) is located at residues 23 to 51; sequence CLACRRKKLKCDHGRPCSNCLKRSTIQSC. Polar residues predominate over residues 93-113; sequence GTKSQSDYENQQSHNLPSTPS. The disordered stretch occupies residues 93 to 119; that stretch reads GTKSQSDYENQQSHNLPSTPSADAETQ.

The protein resides in the nucleus. It localises to the cytoplasm. It is found in the cytoskeleton. Its subcellular location is the spindle. This is an uncharacterized protein from Schizosaccharomyces pombe (strain 972 / ATCC 24843) (Fission yeast).